Consider the following 671-residue polypeptide: MESIEQQLTELRTTLRHHEYLYHVMDAPEIPDAEYDRLMRELRELETKHPELITPDSPTQRVGAAPLAAFSQIRHEVPMLSLDNVFDEESFLAFNKRVQDRLKSNEKVTWCCELKLDGLAVSILYENGVLVSAATRGDGTTGEDITSNVRTIRAIPLKLHGENIPARLEVRGEVFLPQAGFEKINEDARRTGGKVFANPRNAAAGSLRQLDPRITAKRPLTFFCYGVGVLEGGELPDTHLGRLLQFKKWGLPVSDRVTLCESAEEVLAFYHKVEEDRPTLGFDIDGVVIKVNSLAQQEQLGFVARAPRWAVAFKFPAQEQMTFVRDVEFQVGRTGAITPVARLEPVHVAGVLVSNATLHNADEIERLGLRIGDKVVIRRAGDVIPQVVNVVLSERPEDTREVVFPTHCPVCGSDVERVEGEAVARCTGGLICGAQRKESLKHFVSRRAMDVDGMGDKIIDQLVEKEYVHTPADLFKLTAGKLTGLERMGPKSAQNVVNALEKAKETTFARFLYALGIREVGEATAAGLAAYFGTLEALEAASIEELQKVPDVGIVVASHVHNFFAEESNRNVISELLAEGVHWPEPIVINAEEIDSPFAGKTVVLTGSLSQMSRDDAKARLVELGAKVAGSVSKKTDLVIAGEAAGSKLAKAQELGIEVIDETEMLRLLGS.

Residues D32–D36, S81–L82, and E113 each bind NAD(+). K115 functions as the N6-AMP-lysine intermediate in the catalytic mechanism. 4 residues coordinate NAD(+): R136, E173, K290, and K314. Residues C408, C411, C426, and C432 each coordinate Zn(2+). Residues E593 to S671 form the BRCT domain.

This sequence belongs to the NAD-dependent DNA ligase family. LigA subfamily. The cofactor is Mg(2+). Requires Mn(2+) as cofactor.

The catalysed reaction is NAD(+) + (deoxyribonucleotide)n-3'-hydroxyl + 5'-phospho-(deoxyribonucleotide)m = (deoxyribonucleotide)n+m + AMP + beta-nicotinamide D-nucleotide.. Its function is as follows. DNA ligase that catalyzes the formation of phosphodiester linkages between 5'-phosphoryl and 3'-hydroxyl groups in double-stranded DNA using NAD as a coenzyme and as the energy source for the reaction. It is essential for DNA replication and repair of damaged DNA. The polypeptide is DNA ligase (Escherichia coli O6:H1 (strain CFT073 / ATCC 700928 / UPEC)).